The sequence spans 347 residues: Selenide, water dikinase (347 aa).

Cys17 is a catalytic residue. Residues Lys20 and 48–50 (TRD) each bind ATP. Asp51 contacts Mg(2+). Residues Asp68, Asp91, and 139–141 (GHS) contribute to the ATP site. Asp91 provides a ligand contact to Mg(2+). Residue Asp227 coordinates Mg(2+).

It belongs to the selenophosphate synthase 1 family. Class I subfamily. As to quaternary structure, homodimer. Mg(2+) is required as a cofactor.

The catalysed reaction is hydrogenselenide + ATP + H2O = selenophosphate + AMP + phosphate + 2 H(+). Functionally, synthesizes selenophosphate from selenide and ATP. This Escherichia coli O139:H28 (strain E24377A / ETEC) protein is Selenide, water dikinase.